The chain runs to 151 residues: Deoxyuridine 5'-triphosphate nucleotidohydrolase (151 aa).

Residues 70-72 (RSG), N83, 87-89 (LID), and M97 contribute to the substrate site.

The protein belongs to the dUTPase family. Mg(2+) serves as cofactor.

The catalysed reaction is dUTP + H2O = dUMP + diphosphate + H(+). Its pathway is pyrimidine metabolism; dUMP biosynthesis; dUMP from dCTP (dUTP route): step 2/2. In terms of biological role, this enzyme is involved in nucleotide metabolism: it produces dUMP, the immediate precursor of thymidine nucleotides and it decreases the intracellular concentration of dUTP so that uracil cannot be incorporated into DNA. The chain is Deoxyuridine 5'-triphosphate nucleotidohydrolase from Yersinia pseudotuberculosis serotype O:1b (strain IP 31758).